The sequence spans 136 residues: 5-hydroxyisourate hydrolase (136 aa).

The first 20 residues, 1–20 (MKRYILATAIASLVAAPAMA), serve as a signal peptide directing secretion. 3 residues coordinate substrate: histidine 31, arginine 69, and tyrosine 133.

Belongs to the transthyretin family. 5-hydroxyisourate hydrolase subfamily. Homotetramer.

It localises to the periplasm. The enzyme catalyses 5-hydroxyisourate + H2O = 5-hydroxy-2-oxo-4-ureido-2,5-dihydro-1H-imidazole-5-carboxylate + H(+). Catalyzes the hydrolysis of 5-hydroxyisourate (HIU) to 2-oxo-4-hydroxy-4-carboxy-5-ureidoimidazoline (OHCU). This Salmonella typhi protein is 5-hydroxyisourate hydrolase (hiuH).